The sequence spans 457 residues: Siroheme synthase (457 aa).

A precorrin-2 dehydrogenase /sirohydrochlorin ferrochelatase region spans residues 1–204 (MDHLPIFCQL…NDQKAITETT (204 aa)). NAD(+) contacts are provided by residues 22–23 (DV) and 43–44 (LA). The residue at position 128 (serine 128) is a Phosphoserine. A uroporphyrinogen-III C-methyltransferase region spans residues 216 to 457 (GEVVLVGAGP…RDKLNWFSNH (242 aa)). S-adenosyl-L-methionine is bound at residue proline 225. The active-site Proton acceptor is the aspartate 248. The active-site Proton donor is the lysine 270. Residues 301 to 303 (GGD), isoleucine 306, 331 to 332 (TA), methionine 382, and glycine 411 contribute to the S-adenosyl-L-methionine site.

This sequence in the N-terminal section; belongs to the precorrin-2 dehydrogenase / sirohydrochlorin ferrochelatase family. In the C-terminal section; belongs to the precorrin methyltransferase family.

The enzyme catalyses uroporphyrinogen III + 2 S-adenosyl-L-methionine = precorrin-2 + 2 S-adenosyl-L-homocysteine + H(+). It catalyses the reaction precorrin-2 + NAD(+) = sirohydrochlorin + NADH + 2 H(+). It carries out the reaction siroheme + 2 H(+) = sirohydrochlorin + Fe(2+). It participates in cofactor biosynthesis; adenosylcobalamin biosynthesis; precorrin-2 from uroporphyrinogen III: step 1/1. The protein operates within cofactor biosynthesis; adenosylcobalamin biosynthesis; sirohydrochlorin from precorrin-2: step 1/1. It functions in the pathway porphyrin-containing compound metabolism; siroheme biosynthesis; precorrin-2 from uroporphyrinogen III: step 1/1. Its pathway is porphyrin-containing compound metabolism; siroheme biosynthesis; siroheme from sirohydrochlorin: step 1/1. It participates in porphyrin-containing compound metabolism; siroheme biosynthesis; sirohydrochlorin from precorrin-2: step 1/1. Functionally, multifunctional enzyme that catalyzes the SAM-dependent methylations of uroporphyrinogen III at position C-2 and C-7 to form precorrin-2 via precorrin-1. Then it catalyzes the NAD-dependent ring dehydrogenation of precorrin-2 to yield sirohydrochlorin. Finally, it catalyzes the ferrochelation of sirohydrochlorin to yield siroheme. In Escherichia coli (strain 55989 / EAEC), this protein is Siroheme synthase.